Here is a 157-residue protein sequence, read N- to C-terminus: Nucleoside diphosphate kinase (157 aa).

Residues lysine 12, phenylalanine 60, arginine 88, threonine 94, and arginine 105 each contribute to the ATP site. Histidine 121 acts as the Pros-phosphohistidine intermediate in catalysis.

Belongs to the NDK family. Requires Mg(2+) as cofactor.

The protein resides in the cytoplasm. The enzyme catalyses a 2'-deoxyribonucleoside 5'-diphosphate + ATP = a 2'-deoxyribonucleoside 5'-triphosphate + ADP. It catalyses the reaction a ribonucleoside 5'-diphosphate + ATP = a ribonucleoside 5'-triphosphate + ADP. In terms of biological role, major role in the synthesis of nucleoside triphosphates other than ATP. The ATP gamma phosphate is transferred to the NDP beta phosphate via a ping-pong mechanism, using a phosphorylated active-site intermediate. In Pyrococcus horikoshii (strain ATCC 700860 / DSM 12428 / JCM 9974 / NBRC 100139 / OT-3), this protein is Nucleoside diphosphate kinase.